A 180-amino-acid chain; its full sequence is Large ribosomal subunit protein uL5 (180 aa).

It belongs to the universal ribosomal protein uL5 family. Part of the 50S ribosomal subunit; part of the 5S rRNA/L5/L18/L25 subcomplex. Contacts the 5S rRNA and the P site tRNA. Forms a bridge to the 30S subunit in the 70S ribosome.

In terms of biological role, this is one of the proteins that bind and probably mediate the attachment of the 5S RNA into the large ribosomal subunit, where it forms part of the central protuberance. In the 70S ribosome it contacts protein S13 of the 30S subunit (bridge B1b), connecting the 2 subunits; this bridge is implicated in subunit movement. Contacts the P site tRNA; the 5S rRNA and some of its associated proteins might help stabilize positioning of ribosome-bound tRNAs. The protein is Large ribosomal subunit protein uL5 of Mycoplasma mycoides subsp. mycoides SC (strain CCUG 32753 / NCTC 10114 / PG1).